We begin with the raw amino-acid sequence, 141 residues long: Small ribosomal subunit protein eS17w (141 aa).

This sequence belongs to the eukaryotic ribosomal protein eS17 family.

The sequence is that of Small ribosomal subunit protein eS17w (RPS17D) from Arabidopsis thaliana (Mouse-ear cress).